A 302-amino-acid chain; its full sequence is Segregation and condensation protein A (302 aa).

It belongs to the ScpA family. As to quaternary structure, component of a cohesin-like complex composed of ScpA, ScpB and the Smc homodimer, in which ScpA and ScpB bind to the head domain of Smc. The presence of the three proteins is required for the association of the complex with DNA.

Its subcellular location is the cytoplasm. Participates in chromosomal partition during cell division. May act via the formation of a condensin-like complex containing Smc and ScpB that pull DNA away from mid-cell into both cell halves. In Xylella fastidiosa (strain Temecula1 / ATCC 700964), this protein is Segregation and condensation protein A.